The sequence spans 354 residues: Histidinol-phosphate aminotransferase (354 aa).

Lysine 210 bears the N6-(pyridoxal phosphate)lysine mark.

This sequence belongs to the class-II pyridoxal-phosphate-dependent aminotransferase family. Histidinol-phosphate aminotransferase subfamily. Homodimer. Pyridoxal 5'-phosphate is required as a cofactor.

The enzyme catalyses L-histidinol phosphate + 2-oxoglutarate = 3-(imidazol-4-yl)-2-oxopropyl phosphate + L-glutamate. It participates in amino-acid biosynthesis; L-histidine biosynthesis; L-histidine from 5-phospho-alpha-D-ribose 1-diphosphate: step 7/9. The polypeptide is Histidinol-phosphate aminotransferase (Clostridium botulinum (strain Langeland / NCTC 10281 / Type F)).